The sequence spans 569 residues: Arginine--tRNA ligase (569 aa).

The 'HIGH' region motif lies at 123-133; that stretch reads ANPNGPLHVGH.

It belongs to the class-I aminoacyl-tRNA synthetase family.

The protein resides in the cytoplasm. It catalyses the reaction tRNA(Arg) + L-arginine + ATP = L-arginyl-tRNA(Arg) + AMP + diphosphate. The protein is Arginine--tRNA ligase of Methanosarcina barkeri (strain Fusaro / DSM 804).